A 266-amino-acid polypeptide reads, in one-letter code: Non-structural maintenance of chromosomes element 1 homolog (266 aa).

Positions Met-1 to Ala-102 are interaction with NSMCE3. The RING-type; atypical zinc-finger motif lies at Cys-191–Asn-232. Residues Glu-246–His-266 form a disordered region. Ser-251 is modified (phosphoserine). Over residues Ser-256 to His-266 the composition is skewed to basic residues.

Belongs to the NSE1 family. Component of the SMC5-SMC6 complex which consists at least of SMC5, SMC6, NSMCE2, NSMCE1, NSMCE4A or EID3 and NSMCE3. NSMCE1, NSMCE4A or EID3 and NSMCE3 probably form a subcomplex that bridges the head domains of the SMC5-SMC6 heterodimer. Interacts with NSMCE3. Interacts with MAGEF1. Ubiquitinated.

It is found in the nucleus. It localises to the chromosome. The protein resides in the telomere. It carries out the reaction S-ubiquitinyl-[E2 ubiquitin-conjugating enzyme]-L-cysteine + [acceptor protein]-L-lysine = [E2 ubiquitin-conjugating enzyme]-L-cysteine + N(6)-ubiquitinyl-[acceptor protein]-L-lysine.. In terms of biological role, RING-type zinc finger-containing E3 ubiquitin ligase that assembles with melanoma antigen protein (MAGE) to catalyze the direct transfer of ubiquitin from E2 ubiquitin-conjugating enzyme to a specific substrate. Within MAGE-RING ubiquitin ligase complex, MAGE stimulates and specifies ubiquitin ligase activity likely through recruitment and/or stabilization of the E2 ubiquitin-conjugating enzyme at the E3:substrate complex. Involved in maintenance of genome integrity, DNA damage response and DNA repair. NSMCE3/MAGEG1 and NSMCE1 ubiquitin ligase are components of SMC5-SMC6 complex and may positively regulate homologous recombination-mediated DNA repair. MAGEF1-NSMCE1 ubiquitin ligase promotes proteasomal degradation of MMS19, a key component of the cytosolic iron-sulfur protein assembly (CIA) machinery. Down-regulation of MMS19 impairs the activity of several DNA repair and metabolism enzymes such as ERCC2/XPD, FANCJ, RTEL1 and POLD1 that require iron-sulfur clusters as cofactors. The protein is Non-structural maintenance of chromosomes element 1 homolog of Homo sapiens (Human).